The sequence spans 225 residues: UPF0758 protein BCB4264_A4572 (225 aa).

The MPN domain maps to 103 to 225 (SIRSPEDCAK…FVSLKEKGHI (123 aa)). Zn(2+) is bound by residues H174, H176, and D187. The short motif at 174–187 (HNHPSGDPTPSRED) is the JAMM motif element.

The protein belongs to the UPF0758 family.

The sequence is that of UPF0758 protein BCB4264_A4572 from Bacillus cereus (strain B4264).